The chain runs to 786 residues: Diamine oxidase [copper-containing] 1, peroxisomal (786 aa).

419 to 430 (AFDAGEDGLGKN) lines the substrate pocket. Residue aspartate 421 is the Proton acceptor of the active site. Cysteines 440 and 466 form a disulfide. A substrate-binding site is contributed by 502–507 (VANYEY). The active-site Schiff-base intermediate with substrate; via topaquinone is the tyrosine 505. Residue tyrosine 505 is modified to 2',4',5'-topaquinone. Cu cation contacts are provided by histidine 555 and histidine 557. Mn(2+) contacts are provided by aspartate 710 and isoleucine 711. Residue histidine 721 coordinates Cu cation.

The protein belongs to the copper/topaquinone oxidase family. As to quaternary structure, homodimer. Requires Cu cation as cofactor. Zn(2+) is required as a cofactor. L-topaquinone serves as cofactor. In terms of processing, topaquinone (TPQ) is generated by copper-dependent autoxidation of a specific tyrosyl residue. In terms of tissue distribution, mainly expressed in roots, and, to a lower extent, in leaves and stems.

It localises to the peroxisome. The catalysed reaction is a primary methyl amine + O2 + H2O = an aldehyde + H2O2 + NH4(+). The enzyme catalyses N-methylputrescine + O2 + H2O = 4-methylaminobutanal + H2O2 + NH4(+). The protein operates within alkaloid biosynthesis; nicotine biosynthesis. It functions in the pathway amine and polyamine degradation; putrescine degradation. Involved in putrescine catabolism in peroxisomes. May also be involved in the biosynthesis of pyridine alkaloid natural products, leading mainly to the production of anabasine, anatabine, nicotine and nornicotine, effective deterrents against herbivores with antiparasitic and pesticide properties (neurotoxins); nornicotine serves as the precursor in the synthesis of the carcinogen compound N'-nitrosonornicotine (NNN). Oxidizes preferentially non-N-methylated amines. The polypeptide is Diamine oxidase [copper-containing] 1, peroxisomal (Nicotiana tabacum (Common tobacco)).